A 159-amino-acid chain; its full sequence is Ribosomal RNA large subunit methyltransferase H (159 aa).

Residues leucine 76, glycine 108, and 127 to 132 each bind S-adenosyl-L-methionine; that span reads FGQLTL.

Belongs to the RNA methyltransferase RlmH family. Homodimer.

It is found in the cytoplasm. It carries out the reaction pseudouridine(1915) in 23S rRNA + S-adenosyl-L-methionine = N(3)-methylpseudouridine(1915) in 23S rRNA + S-adenosyl-L-homocysteine + H(+). Specifically methylates the pseudouridine at position 1915 (m3Psi1915) in 23S rRNA. This chain is Ribosomal RNA large subunit methyltransferase H, found in Streptococcus gordonii (strain Challis / ATCC 35105 / BCRC 15272 / CH1 / DL1 / V288).